The following is a 568-amino-acid chain: Autophagy-related protein 17 (568 aa).

Disordered regions lie at residues 1–59 (MASF…DSSE) and 522–568 (SYEM…ERPF). Over residues 522 to 546 (SYEMEAHGEPENEGKVETAYERETE) the composition is skewed to basic and acidic residues.

It belongs to the ATG17 family.

It is found in the cytoplasm. Its subcellular location is the preautophagosomal structure membrane. Functionally, autophagy-specific protein that functions in response to autophagy-inducing signals as a scaffold to recruit other ATG proteins to organize pre-autophagosomal structure (PAS) formation. Modulates the timing and magnitude of the autophagy response, such as the size of the sequestering vesicles. Plays particularly a role in pexophagy and nucleophagy. The chain is Autophagy-related protein 17 (apg-9) from Neurospora crassa (strain ATCC 24698 / 74-OR23-1A / CBS 708.71 / DSM 1257 / FGSC 987).